A 419-amino-acid chain; its full sequence is Sphingomyelin phosphodiesterase 2 (419 aa).

E49 is a binding site for Mg(2+). H272 functions as the Proton acceptor in the catalytic mechanism. A run of 2 helical transmembrane segments spans residues 326-346 (FSGY…VLAA) and 354-374 (AIIL…VYLF).

The protein belongs to the neutral sphingomyelinase family. Requires Mg(2+) as cofactor. As to expression, although widely expressed in all tissues examined, except the spleen, high enzymatic activity occurs only in the brain.

Its subcellular location is the cell membrane. It carries out the reaction a sphingomyelin + H2O = phosphocholine + an N-acylsphing-4-enine + H(+). It catalyses the reaction an N-(acyl)-sphingosylphosphocholine + H2O = an N-acyl-sphingoid base + phosphocholine + H(+). The catalysed reaction is 1-O-octadecyl-sn-glycero-3-phosphocholine + H2O = 1-O-octadecyl-sn-glycerol + phosphocholine + H(+). The enzyme catalyses 1-hexadecanoyl-sn-glycero-3-phosphocholine + H2O = 1-hexadecanoyl-sn-glycerol + phosphocholine + H(+). It carries out the reaction a sphingosylphosphocholine + H2O = a sphingoid base + phosphocholine + H(+). It catalyses the reaction 1-O-hexadecyl-sn-glycero-3-phosphocholine + H2O = 1-O-hexadecyl-sn-glycerol + phosphocholine + H(+). The protein operates within lipid metabolism; sphingolipid metabolism. With respect to regulation, activated by arachidonic acid. In terms of biological role, catalyzes, at least in vitro, the hydrolysis of sphingomyelin to form ceramide and phosphocholine. Also hydrolyzes 1-O-alkyl-2-lyso-sn-glycero-3-phosphocholine (lyso-platelet-activating factor) in vivo. Also acts on 1-acyl-2-lyso-sn-glycero-3-phosphocholine (lyso-PC) and sphingosylphosphocholine. In Mus musculus (Mouse), this protein is Sphingomyelin phosphodiesterase 2.